The primary structure comprises 173 residues: Large ribosomal subunit protein uL10 (173 aa).

The protein belongs to the universal ribosomal protein uL10 family. As to quaternary structure, part of the ribosomal stalk of the 50S ribosomal subunit. The N-terminus interacts with L11 and the large rRNA to form the base of the stalk. The C-terminus forms an elongated spine to which L12 dimers bind in a sequential fashion forming a multimeric L10(L12)X complex.

In terms of biological role, forms part of the ribosomal stalk, playing a central role in the interaction of the ribosome with GTP-bound translation factors. The protein is Large ribosomal subunit protein uL10 of Corynebacterium aurimucosum (strain ATCC 700975 / DSM 44827 / CIP 107346 / CN-1) (Corynebacterium nigricans).